The chain runs to 400 residues: Pectinesterase B (400 aa).

Positions 171 and 205 each coordinate substrate. Asp-228 serves as the catalytic Proton donor. The Nucleophile role is filled by Asp-261. Substrate contacts are provided by Arg-325 and Trp-327.

The protein belongs to the pectinesterase family.

It catalyses the reaction [(1-&gt;4)-alpha-D-galacturonosyl methyl ester](n) + n H2O = [(1-&gt;4)-alpha-D-galacturonosyl](n) + n methanol + n H(+). It functions in the pathway glycan metabolism; pectin degradation; 2-dehydro-3-deoxy-D-gluconate from pectin: step 1/5. In Pectobacterium parmentieri, this protein is Pectinesterase B (pemB).